The chain runs to 653 residues: Chaperone protein HtpG (653 aa).

The a; substrate-binding stretch occupies residues 1-361 (MSETNQVQNH…SNDLPLNVSR (361 aa)). The tract at residues 362–578 (EILQDNKVTQ…DDDMSSQMAK (217 aa)) is b. Positions 579–653 (LMASVGQEVP…LNKLMLSLTK (75 aa)) are c.

This sequence belongs to the heat shock protein 90 family. In terms of assembly, homodimer.

The protein localises to the cytoplasm. In terms of biological role, molecular chaperone. Has ATPase activity. This chain is Chaperone protein HtpG, found in Colwellia psychrerythraea (strain 34H / ATCC BAA-681) (Vibrio psychroerythus).